Reading from the N-terminus, the 293-residue chain is Shikimate dehydrogenase (NADP(+)) (293 aa).

Residues 20–22 (SLT) and threonine 72 each bind shikimate. The Proton acceptor role is filled by lysine 76. Residues asparagine 97 and aspartate 112 each contribute to the shikimate site. NADP(+)-binding positions include 136–140 (GAGGA) and isoleucine 230. Shikimate is bound at residue tyrosine 232. Glycine 253 serves as a coordination point for NADP(+).

Belongs to the shikimate dehydrogenase family. As to quaternary structure, homodimer.

It carries out the reaction shikimate + NADP(+) = 3-dehydroshikimate + NADPH + H(+). The protein operates within metabolic intermediate biosynthesis; chorismate biosynthesis; chorismate from D-erythrose 4-phosphate and phosphoenolpyruvate: step 4/7. Involved in the biosynthesis of the chorismate, which leads to the biosynthesis of aromatic amino acids. Catalyzes the reversible NADPH linked reduction of 3-dehydroshikimate (DHSA) to yield shikimate (SA). The sequence is that of Shikimate dehydrogenase (NADP(+)) from Pseudarthrobacter chlorophenolicus (strain ATCC 700700 / DSM 12829 / CIP 107037 / JCM 12360 / KCTC 9906 / NCIMB 13794 / A6) (Arthrobacter chlorophenolicus).